A 208-amino-acid chain; its full sequence is U11/U12 small nuclear ribonucleoprotein 35 kDa protein (208 aa).

Residues 50–128 (LTLFVARLNP…YELLVDVEQE (79 aa)) form the RRM domain. The disordered stretch occupies residues 133-208 (GWRPRRLGGG…TEDRTHRHTY (76 aa)). A compositionally biased stretch (basic and acidic residues) spans 171–208 (RPAEPRGRETERERDRRDYRDRRHERTHTEDRTHRHTY).

It is found in the nucleus. This chain is U11/U12 small nuclear ribonucleoprotein 35 kDa protein (snrnp35), found in Danio rerio (Zebrafish).